The sequence spans 120 residues: Aspartate 1-decarboxylase (120 aa).

S25 (schiff-base intermediate with substrate; via pyruvic acid) is an active-site residue. The residue at position 25 (S25) is a Pyruvic acid (Ser). T57 contacts substrate. Residue Y58 is the Proton donor of the active site. Substrate is bound at residue 73–75 (GAA).

It belongs to the PanD family. Heterooctamer of four alpha and four beta subunits. Pyruvate is required as a cofactor. Is synthesized initially as an inactive proenzyme, which is activated by self-cleavage at a specific serine bond to produce a beta-subunit with a hydroxyl group at its C-terminus and an alpha-subunit with a pyruvoyl group at its N-terminus.

It is found in the cytoplasm. It carries out the reaction L-aspartate + H(+) = beta-alanine + CO2. It participates in cofactor biosynthesis; (R)-pantothenate biosynthesis; beta-alanine from L-aspartate: step 1/1. In terms of biological role, catalyzes the pyruvoyl-dependent decarboxylation of aspartate to produce beta-alanine. This is Aspartate 1-decarboxylase from Deinococcus deserti (strain DSM 17065 / CIP 109153 / LMG 22923 / VCD115).